The primary structure comprises 186 residues: Biphenyl dioxygenase subunit beta (186 aa).

The protein belongs to the bacterial ring-hydroxylating dioxygenase beta subunit family. Heterohexamer consisting of 3 BphA subunits and 3 BphE subunits. A ferredoxin (BphF) and a ferredoxin reductase (BphG) must be present to obtain activity.

The enzyme catalyses biphenyl + NADH + O2 + H(+) = (2R,3S)-3-phenylcyclohexa-3,5-diene-1,2-diol + NAD(+). Its pathway is xenobiotic degradation; biphenyl degradation; 2-hydroxy-2,4-pentadienoate and benzoate from biphenyl: step 1/4. The beta subunit may be responsible for the substrate specificity of the enzyme. The sequence is that of Biphenyl dioxygenase subunit beta (bphE) from Comamonas testosteroni (Pseudomonas testosteroni).